A 1081-amino-acid chain; its full sequence is Dyslexia-associated protein KIAA0319 homolog (1081 aa).

The first 22 residues, 1-22 (MVSPPGVLSSLLLLAAMAGGSS), serve as a signal peptide directing secretion. Residues 23 to 99 (QQCSEGRTYS…PRTTGPIRSY (77 aa)) form the MANSC domain. The Extracellular portion of the chain corresponds to 23–964 (QQCSEGRTYS…WDGESNCEWS (942 aa)). Disordered regions lie at residues 141–160 (LPFLGKDGGPEETAEYSDDY), 168–216 (LQPS…DLTP), and 228–298 (NEST…TTVE). Composition is skewed to polar residues over residues 197 to 209 (ASATGDNSAASTE), 228 to 253 (NESTWSPTPRHSEMSSMWPSSVTASP), and 283 to 298 (HNPSPASLESSPTTVE). PKD domains follow at residues 345–436 (AVSA…VMPA), 444–533 (VAIV…IRGS), 539–629 (VANA…VQAE), 630–723 (NNQA…VKKE), and 729–820 (RAQA…VLPD). 2 N-linked (GlcNAc...) asparagine glycosylation sites follow: Asn430 and Asn522. A helical membrane pass occupies residues 965–985 (VFYVAALALTLTVLTGAVTWV). Residues 986–1081 (CICCCRRRKR…VSFGYYSKDR (96 aa)) lie on the Cytoplasmic side of the membrane. Positions 1004-1007 (YTIL) match the Endocytosis signal motif.

In terms of assembly, homodimer. Interacts with AP2M1; required for clathrin-mediated endocytosis. N-glycosylated. In terms of processing, O-glycosylated. Post-translationally, shedding of the extracellular domain and intramembrane cleavage produce several proteolytic products. The intramembrane cleavage releases a soluble cytoplasmic polypeptide that translocates to the nucleolus. As to expression, highly expressed during development in ventricular zone, intermediate zone, cortical plate, striatum, hippocampus, and brain stem.

Its subcellular location is the cell membrane. It is found in the early endosome membrane. Involved in neuronal migration during development of the cerebral neocortex. May function in a cell autonomous and a non-cell autonomous manner and play a role in appropriate adhesion between migrating neurons and radial glial fibers. May also regulate growth and differentiation of dendrites. The protein is Dyslexia-associated protein KIAA0319 homolog of Rattus norvegicus (Rat).